A 299-amino-acid chain; its full sequence is Acetyl-hydrolase (299 aa).

The short motif at 73 to 75 is the Involved in the stabilization of the negatively charged intermediate by the formation of the oxyanion hole element; the sequence is HGG. Residues Ser-143, Glu-237, and His-267 contribute to the active site.

The protein belongs to the 'GDXG' lipolytic enzyme family.

The protein operates within secondary metabolite biosynthesis; bialaphos biosynthesis. Functionally, this protein removes the N-acetyl group from bialaphos as one of the final steps of biosynthesis of phosphinothricin tripeptide (PTT), also known as bialaphos (BA), a natural-product antibiotic and potent herbicide. The chain is Acetyl-hydrolase (bah) from Streptomyces hygroscopicus.